An 832-amino-acid polypeptide reads, in one-letter code: Protein P (832 aa).

A terminal protein domain (TP) region spans residues 1 to 177 (MPLSCPHFRK…FCGSPYSWEQ (177 aa)). Residues 178-335 (ELQHGAEPVC…YCLSHLVNLL (158 aa)) form a spacer region. A compositionally biased stretch (low complexity) spans 208-224 (KQSRLGLQSQQRQLARS). Residues 208 to 241 (KQSRLGLQSQQRQLARSHQGRSGSIRARVHSTTR) are disordered. The segment at 336–679 (EDWGPCTEHG…YLTLYPVARQ (344 aa)) is polymerase/reverse transcriptase domain (RT). The Reverse transcriptase domain maps to 346–589 (EHHIRIPRTP…YSLNFMGYII (244 aa)). The Mg(2+) site is built by Asp-418, Asp-540, and Asp-541.

It belongs to the hepadnaviridae P protein family.

It catalyses the reaction DNA(n) + a 2'-deoxyribonucleoside 5'-triphosphate = DNA(n+1) + diphosphate. The enzyme catalyses Endonucleolytic cleavage to 5'-phosphomonoester.. With respect to regulation, activated by host HSP70 and HSP40 in vitro to be able to bind the epsilon loop of the pgRNA. Because deletion of the RNase H region renders the protein partly chaperone-independent, the chaperones may be needed indirectly to relieve occlusion of the RNA-binding site by this domain. Inhibited by several reverse-transcriptase inhibitors: Lamivudine, Adefovir and Entecavir. Its function is as follows. Multifunctional enzyme that converts the viral RNA genome into dsDNA in viral cytoplasmic capsids. This enzyme displays a DNA polymerase activity that can copy either DNA or RNA templates, and a ribonuclease H (RNase H) activity that cleaves the RNA strand of RNA-DNA heteroduplexes in a partially processive 3'- to 5'-endonucleasic mode. Neo-synthesized pregenomic RNA (pgRNA) are encapsidated together with the P protein, and reverse-transcribed inside the nucleocapsid. Initiation of reverse-transcription occurs first by binding the epsilon loop on the pgRNA genome, and is initiated by protein priming, thereby the 5'-end of (-)DNA is covalently linked to P protein. Partial (+)DNA is synthesized from the (-)DNA template and generates the relaxed circular DNA (RC-DNA) genome. After budding and infection, the RC-DNA migrates in the nucleus, and is converted into a plasmid-like covalently closed circular DNA (cccDNA). The activity of P protein does not seem to be necessary for cccDNA generation, and is presumably released from (+)DNA by host nuclear DNA repair machinery. The sequence is that of Protein P from Gibbon hepatitis B virus subtype ayw3q (isolate Hope) (HBVgbn).